The chain runs to 463 residues: Soluble pyridine nucleotide transhydrogenase (463 aa).

35-44 (EDKPTVGGNC) lines the FAD pocket.

It belongs to the class-I pyridine nucleotide-disulfide oxidoreductase family. FAD serves as cofactor.

It localises to the cytoplasm. The catalysed reaction is NAD(+) + NADPH = NADH + NADP(+). Conversion of NADPH, generated by peripheral catabolic pathways, to NADH, which can enter the respiratory chain for energy generation. In Marinobacter nauticus (strain ATCC 700491 / DSM 11845 / VT8) (Marinobacter aquaeolei), this protein is Soluble pyridine nucleotide transhydrogenase.